Consider the following 72-residue polypeptide: Protein SlyX (72 aa).

Belongs to the SlyX family.

The chain is Protein SlyX from Cronobacter sakazakii (strain ATCC BAA-894) (Enterobacter sakazakii).